The primary structure comprises 115 residues: Nucleoid-associated protein Pro_0020 (115 aa).

The protein belongs to the YbaB/EbfC family. As to quaternary structure, homodimer.

The protein resides in the cytoplasm. It localises to the nucleoid. In terms of biological role, binds to DNA and alters its conformation. May be involved in regulation of gene expression, nucleoid organization and DNA protection. The polypeptide is Nucleoid-associated protein Pro_0020 (Prochlorococcus marinus (strain SARG / CCMP1375 / SS120)).